Reading from the N-terminus, the 212-residue chain is uncharacterized protein (212 aa).

The interval 47–129 (RELLDRRRSQ…GNIDNGQPRR (83 aa)) is disordered.

This is an uncharacterized protein from Caenorhabditis elegans.